Reading from the N-terminus, the 296-residue chain is Putative ankyrin repeat protein FPV216 (296 aa).

ANK repeat units follow at residues 73–102 (SYVN…DVNT) and 107–136 (LVIT…NINI).

The sequence is that of Putative ankyrin repeat protein FPV216 from Fowlpox virus (strain NVSL) (FPV).